The chain runs to 179 residues: Cytochrome c-type biogenesis protein CcmE (179 aa).

The Cytoplasmic portion of the chain corresponds to 1–8 (MTPRRKSR). A helical; Signal-anchor for type II membrane protein transmembrane segment spans residues 9–29 (MTVILFVLLGISIASALVLYA). Over 30–179 (LRQNIDLFYT…QKTSMQEGQK (150 aa)) the chain is Periplasmic. Heme is bound by residues H131 and Y135. Residues 151-179 (MGVADLKGESERDRQEKAYQKTSMQEGQK) are disordered. Basic and acidic residues predominate over residues 156–169 (LKGESERDRQEKAY). Residues 170 to 179 (QKTSMQEGQK) are compositionally biased toward polar residues.

This sequence belongs to the CcmE/CycJ family.

It localises to the cell inner membrane. In terms of biological role, heme chaperone required for the biogenesis of c-type cytochromes. Transiently binds heme delivered by CcmC and transfers the heme to apo-cytochromes in a process facilitated by CcmF and CcmH. This chain is Cytochrome c-type biogenesis protein CcmE, found in Pasteurella multocida (strain Pm70).